Here is a 123-residue protein sequence, read N- to C-terminus: MKSLLFTLAVFMLLAQLVSGNLYVKRCLNDIGICKKTCKPEEVRSEHGWVMCGKRKACCVPADKRSAYPSFCVHSKTTKTSTVTARATATTATTATAATPLMISNGLISLMTTMAATPVSPTT.

The signal sequence occupies residues 1–20; sequence MKSLLFTLAVFMLLAQLVSG. Residues 21–63 are in vitro binds to LPS, mediates antimicrobial activity and inhibits LPS-mediated inflammation; it reads NLYVKRCLNDIGICKKTCKPEEVRSEHGWVMCGKRKACCVPAD. Cystine bridges form between cysteine 27/cysteine 58, cysteine 34/cysteine 52, and cysteine 38/cysteine 59.

It belongs to the beta-defensin family. As to quaternary structure, homodimer or homooligomer; disulfide-linked. O-glycosylated; glycans contain sialic acids alpha(2,3)-linked to galactose and N-acetylgalactosamine. The C-terminal O-glycosylation contributes substantially to the sperm glyocalyx. In terms of tissue distribution, high-level and epididymis-specific expression. Detected in epithelial cells lining the efferent ductules, initial segment, and cauda regions of the epididymis, but not on spermatozoa.

The protein localises to the secreted. Highly glycosylated atypical beta-defensin involved in several aspects of sperm function. Facilitates sperm transport in the female reproductive tract and contributes to sperm protection against immunodetection; both functions are probably implicating the negative surface charge provided by its O-linked oligosaccharides in the sperm glycocalyx. Involved in binding of sperm to oviductal epithelial cells to form a sperm reservoir until ovulation. Release from the sperm surface during capacitation and ovaluation by an elevation of oviductal fluid pH is unmasking other surface components and allows sperm to penetrate the cumulus matrix and bind to the zona pellucida of the oocyte. In vitro has antimicrobial activity and may inhibit LPS-mediated inflammation. The protein is Beta-defensin 126 (DEFB126) of Macaca fascicularis (Crab-eating macaque).